The chain runs to 133 residues: DUF35 domain-containing scaffold protein (133 aa).

Zn(2+)-binding residues include Cys-23, Cys-26, Cys-37, and Cys-40.

This sequence belongs to the scaffold protein DUF35 family. Interacts with acetoacetyl-CoA thiolase and HMG-CoA synthase (HMGCS) that catalyzes the first and second step in the mevalonate pathway, respectively.

Functions as a scaffold to connect the acetoacetyl-CoA thiolase and HMG-CoA synthase (HMGCS) dimers in the channeling thiolase/HMGCS complex, which allows for efficient coupling of the endergonic thiolase reaction with the exergonic HMGCS reaction. The chain is DUF35 domain-containing scaffold protein from Methanothermobacter thermautotrophicus (strain ATCC 29096 / DSM 1053 / JCM 10044 / NBRC 100330 / Delta H) (Methanobacterium thermoautotrophicum).